The primary structure comprises 38 residues: Iota-conotoxin-like L11.5 (38 aa).

Intrachain disulfides connect Cys5/Cys19, Cys12/Cys24, Cys18/Cys29, and Cys23/Cys36.

It belongs to the conotoxin I1 superfamily. Expressed by the venom duct.

It is found in the secreted. Its function is as follows. Iota-conotoxins bind to voltage-gated sodium channels (Nav) and act as agonists by shifting the voltage-dependence of activation to more hyperpolarized levels. Produces general excitatory symptoms. The chain is Iota-conotoxin-like L11.5 from Conus lynceus (Lynceus cone).